A 444-amino-acid chain; its full sequence is MKHFEANFDGLVGPTHNYAGLSFGNVASLSNAALVSNPKAAAKQGLQKAKALADMGMVQGMLAPQERPDLYTLRRIGFSGSDANVLKQAAKEAPMLLNACCSASSMWTANAATVSPSADTRDGKLHFTPANLVDKLHRSIEPLTTGRILTATFSDPHYFHHHSHLPEHNSFGDEGAANHTRLCNEYGHAGVELFVYGQEATNPNAPKPQKYPARQTLEASMAVARLHQLEEDNCVFIQQNPDVIDQGVFHNDVIAVGNQNVLFYHEQAFLNTQHKIDEIKRKLDTELYFIEVPTAKVAINDAVKSYLFNTQIITLPSGEMVIVAPTDCQENPAVFAYLNELLTLNTPIKQVLYFDVKQSMQNGGGPACLRLRVAMNEMEVAAVNQHTLMNDALFARLNLWVDKHYRDRLTTQDLADPQLIIESRTALDELTQIMKLGSVYQFQR.

Substrate is bound by residues 19–28 (AGLSFGNVAS), Asn110, and 137–138 (HR). Glu174 is a catalytic residue. Position 214 (Arg214) interacts with substrate. The active site involves His250. The substrate site is built by Asp252 and Asn362. The active-site Nucleophile is Cys368.

The protein belongs to the succinylarginine dihydrolase family. As to quaternary structure, homodimer.

It catalyses the reaction N(2)-succinyl-L-arginine + 2 H2O + 2 H(+) = N(2)-succinyl-L-ornithine + 2 NH4(+) + CO2. The protein operates within amino-acid degradation; L-arginine degradation via AST pathway; L-glutamate and succinate from L-arginine: step 2/5. Catalyzes the hydrolysis of N(2)-succinylarginine into N(2)-succinylornithine, ammonia and CO(2). The protein is N-succinylarginine dihydrolase of Shewanella baltica (strain OS155 / ATCC BAA-1091).